The sequence spans 294 residues: Protoheme IX farnesyltransferase (294 aa).

A run of 9 helical transmembrane segments spans residues 22 to 42, 46 to 66, 89 to 109, 116 to 136, 143 to 163, 170 to 190, 211 to 231, 232 to 252, and 272 to 292; these read VTQLAVFCAVIGMFLATPDLP, IVIAATIGIWLLAGAAFAINC, ITVPQTLVFSGVIGGAGMWVL, LTMWLTFATFVGYAVIYTIIL, NIVIGGLSGAMPPALGWAAVA, AWILVLIIFIWTPPHFWALAL, AFTQFHIWLYTIALVATTMLP, FAVGMSGLIYLVVAAVLDVIF, and FTYSIIYLSLLFAALLVDHYL.

The protein belongs to the UbiA prenyltransferase family. Protoheme IX farnesyltransferase subfamily.

The protein resides in the cell inner membrane. It catalyses the reaction heme b + (2E,6E)-farnesyl diphosphate + H2O = Fe(II)-heme o + diphosphate. It functions in the pathway porphyrin-containing compound metabolism; heme O biosynthesis; heme O from protoheme: step 1/1. In terms of biological role, converts heme B (protoheme IX) to heme O by substitution of the vinyl group on carbon 2 of heme B porphyrin ring with a hydroxyethyl farnesyl side group. This Herminiimonas arsenicoxydans protein is Protoheme IX farnesyltransferase.